We begin with the raw amino-acid sequence, 369 residues long: Iron-sulfur cluster assembly SufBD family protein AF_2365 (369 aa).

Belongs to the iron-sulfur cluster assembly SufBD family.

The sequence is that of Iron-sulfur cluster assembly SufBD family protein AF_2365 from Archaeoglobus fulgidus (strain ATCC 49558 / DSM 4304 / JCM 9628 / NBRC 100126 / VC-16).